The primary structure comprises 516 residues: Zinc finger protein 83 (516 aa).

Positions 1 to 20 (MHGRKDDAQKQPVKNQLGLN) are disordered. The segment at 93–115 (YKCSERGKAFHQGLHFTIHQIIH) adopts a C2H2-type 1; degenerate zinc-finger fold. C2H2-type zinc fingers lie at residues 121 to 143 (FKCD…QRIH), 149 to 171 (YKCN…RRIH), 177 to 199 (YKCN…QRIH), 205 to 227 (YKCN…RTIH), 233 to 255 (YECN…LIIH), 261 to 283 (YRCN…QRIH), 289 to 311 (YKCN…WRIH), 317 to 339 (YKCN…WRIH), 345 to 367 (YKCN…LIIH), 373 to 395 (YKCD…HRIH), 401 to 423 (YKCD…WRIH), 429 to 451 (YKCN…RKIH), 457 to 479 (FKCN…HAIH), and 485 to 507 (FKCN…QRFH).

The protein belongs to the krueppel C2H2-type zinc-finger protein family.

The protein localises to the nucleus. May be involved in transcriptional regulation. The protein is Zinc finger protein 83 (ZNF83) of Homo sapiens (Human).